The sequence spans 254 residues: Segregation and condensation protein A (254 aa).

It belongs to the ScpA family. In terms of assembly, component of a cohesin-like complex composed of ScpA, ScpB and the Smc homodimer, in which ScpA and ScpB bind to the head domain of Smc. The presence of the three proteins is required for the association of the complex with DNA.

It is found in the cytoplasm. In terms of biological role, participates in chromosomal partition during cell division. May act via the formation of a condensin-like complex containing Smc and ScpB that pull DNA away from mid-cell into both cell halves. This is Segregation and condensation protein A from Clostridium tetani (strain Massachusetts / E88).